Reading from the N-terminus, the 223-residue chain is Ribose-5-phosphate isomerase A (223 aa).

Residues 26-29 (TGST), 82-85 (DGAD), and 95-98 (KGGG) contribute to the substrate site. Glu-104 serves as the catalytic Proton acceptor. Lys-122 is a substrate binding site.

It belongs to the ribose 5-phosphate isomerase family. As to quaternary structure, homodimer.

The enzyme catalyses aldehydo-D-ribose 5-phosphate = D-ribulose 5-phosphate. The protein operates within carbohydrate degradation; pentose phosphate pathway; D-ribose 5-phosphate from D-ribulose 5-phosphate (non-oxidative stage): step 1/1. Functionally, catalyzes the reversible conversion of ribose-5-phosphate to ribulose 5-phosphate. The polypeptide is Ribose-5-phosphate isomerase A (Streptococcus agalactiae serotype Ia (strain ATCC 27591 / A909 / CDC SS700)).